We begin with the raw amino-acid sequence, 696 residues long: L-amino-acid oxidase (696 aa).

A propeptide spanning residues 1-130 is cleaved from the precursor; the sequence is MKWSAAAGAA…IKMRRDLKAR (130 aa). Residues Glu-207, Arg-215, 236–237, and Val-440 each bind FAD; that span reads MR. Arg-237 contributes to the substrate binding site. Tyr-564 lines the substrate pocket. FAD contacts are provided by residues Glu-649 and 658–661; that span reads IASA.

It belongs to the flavin monoamine oxidase family. It depends on FAD as a cofactor.

It catalyses the reaction an L-alpha-amino acid + O2 + H2O = a 2-oxocarboxylate + H2O2 + NH4(+). The chain is L-amino-acid oxidase (lox) from Neurospora crassa (strain ATCC 24698 / 74-OR23-1A / CBS 708.71 / DSM 1257 / FGSC 987).